We begin with the raw amino-acid sequence, 180 residues long: UPF0227 protein PC1_2487 (180 aa).

It belongs to the UPF0227 family.

This is UPF0227 protein PC1_2487 from Pectobacterium carotovorum subsp. carotovorum (strain PC1).